The chain runs to 397 residues: P-selectin glycoprotein ligand 1 (397 aa).

Positions 1-17 (MSPSFLVLLTILGPGNS) are cleaved as a signal peptide. The propeptide occupies 18–41 (LQLQDPWGHETKEAPGPVHLRERR). The Extracellular segment spans residues 18 to 307 (LQLQDPWGHE…SSDLIPVKQC (290 aa)). A Sulfotyrosine modification is found at Tyr-54. O-linked (GalNAc...) threonine glycosylation is present at Thr-58. Residue Asn-66 is glycosylated (N-linked (GlcNAc...) asparagine). The disordered stretch occupies residues 89–261 (TSAGTSERAT…TMETASTESN (173 aa)). Positions 120–198 (STDSATQWSL…PMEAETSQPA (79 aa)) are enriched in polar residues. Repeat copies occupy residues 126 to 135 (QWSLTSVETV), 136 to 145 (QPASTEVETS), 146 to 155 (QPAPMEAETS), 156 to 165 (QPAPMEAETS), 166 to 175 (QPAPMEAETS), 176 to 185 (QPAPMEADTS), 186 to 195 (QPAPMEAETS), 196 to 205 (QPAPNEAETS), 206 to 215 (KPAPTEAETS), and 216 to 225 (KPAPTEAETT). The 10 X 10 AA tandem repeats stretch occupies residues 126-225 (QWSLTSVETV…KPAPTEAETT (100 aa)). Residues 236–261 (LFTTSAATEVPSTEPTTMETASTESN) show a composition bias toward polar residues. N-linked (GlcNAc...) asparagine glycosylation occurs at Asn-261. The chain crosses the membrane as a helical span at residues 308-328 (LLIILILASLATIFLVCTVVL). Topologically, residues 329–397 (AVRLSRKTHM…DDLTLHSFLP (69 aa)) are cytoplasmic. The segment at 364 to 390 (PVTANGGLPKVQDLKTEPSGDRDGDDL) is disordered. Over residues 375–390 (QDLKTEPSGDRDGDDL) the composition is skewed to basic and acidic residues. The residue at position 391 (Thr-391) is a Phosphothreonine. Ser-394 is modified (phosphoserine).

In terms of assembly, homodimer; disulfide-linked. Interacts with P- and E-selectins, through their lectin/EGF domains. Interaction with P-selectin requires sialyl Lewis X glycan modification and tyrosine sulfation, probably on Tyr-54, for high affinity binding. Dimerization appears not to be required for P-selectin/SELP binding. Interacts with SNX20. Interacts with MSN and SYK; mediates SYK activation downstream of SELPLG. Interacts with HAVCR1. Post-translationally, displays complex, core-2, sialylated and fucosylated O-linked oligosaccharides, at least some of which appear to contain poly-N-acetyllactosamine with varying degrees of substitution. Mainly disialylated or neutral forms of the core-2 tetrasaccharide, Galbeta1--&gt;4GlcNAcbeta1--&gt;6(Galbeta1--&gt;3)GalNAcOH. The GlcN:GalN ratio is approximately 2:1 and the Man:Fuc ratio 3:5. Contains about 14% fucose with alpha-1,3 linkage present in two forms: One species is a disialylated, monofucosylated glycan, and the other, a monosialylated, trifucosylated glycan with a polylactosamine backbone. The fucosylated forms carry the Lewis antigen and are important for interaction with selectins and for functioning. No sulfated O-glycans. Some N-glycosylation. In terms of tissue distribution, highly expressed in blood, bone marrow, brain, adipose tissue, spleen, and thymus. Also expressed in heart, kidney, liver, muscle, ovary, and stomach.

The protein localises to the cell membrane. Its function is as follows. An SLe(x)-type proteoglycan, which through high affinity, calcium-dependent interactions with E- and P-selectins, mediates rapid rolling of leukocytes over vascular surfaces during the initial steps in inflammation. Critical for the initial leukocyte capture. The sequence is that of P-selectin glycoprotein ligand 1 (Selplg) from Mus musculus (Mouse).